Here is a 401-residue protein sequence, read N- to C-terminus: Formate-dependent phosphoribosylglycinamide formyltransferase (401 aa).

N(1)-(5-phospho-beta-D-ribosyl)glycinamide contacts are provided by residues 22–23 (EL) and Glu82. Residues Arg115, Lys157, 162–167 (SSGKGQ), 197–200 (EGFV), and Glu205 contribute to the ATP site. The region spanning 120–315 (RLAAETLALP…EFELHARAIL (196 aa)) is the ATP-grasp domain. Glu274 and Glu286 together coordinate Mg(2+). N(1)-(5-phospho-beta-D-ribosyl)glycinamide contacts are provided by residues Asp293, Lys362, and 369–370 (RR).

The protein belongs to the PurK/PurT family. As to quaternary structure, homodimer.

It carries out the reaction N(1)-(5-phospho-beta-D-ribosyl)glycinamide + formate + ATP = N(2)-formyl-N(1)-(5-phospho-beta-D-ribosyl)glycinamide + ADP + phosphate + H(+). It functions in the pathway purine metabolism; IMP biosynthesis via de novo pathway; N(2)-formyl-N(1)-(5-phospho-D-ribosyl)glycinamide from N(1)-(5-phospho-D-ribosyl)glycinamide (formate route): step 1/1. Functionally, involved in the de novo purine biosynthesis. Catalyzes the transfer of formate to 5-phospho-ribosyl-glycinamide (GAR), producing 5-phospho-ribosyl-N-formylglycinamide (FGAR). Formate is provided by PurU via hydrolysis of 10-formyl-tetrahydrofolate. The sequence is that of Formate-dependent phosphoribosylglycinamide formyltransferase from Polaromonas naphthalenivorans (strain CJ2).